The chain runs to 389 residues: uncharacterized protein (389 aa).

Polar residues predominate over residues 1–12 (MVHATSQSASTE). 2 disordered regions span residues 1–49 (MVHA…DEDL) and 86–111 (HKSM…ANRA). The segment covering 40 to 49 (ESGDEYDEDL) has biased composition (acidic residues). Positions 93-110 (RGKKKRGKTAKKAKKANR) are enriched in basic residues.

This is an uncharacterized protein from Caenorhabditis elegans.